Reading from the N-terminus, the 311-residue chain is tRNA-cytidine(32) 2-sulfurtransferase (311 aa).

The PP-loop motif signature appears at 47 to 52 (SGGKDS). 3 residues coordinate [4Fe-4S] cluster: cysteine 122, cysteine 125, and cysteine 213.

It belongs to the TtcA family. Homodimer. Mg(2+) is required as a cofactor. It depends on [4Fe-4S] cluster as a cofactor.

The protein resides in the cytoplasm. It catalyses the reaction cytidine(32) in tRNA + S-sulfanyl-L-cysteinyl-[cysteine desulfurase] + AH2 + ATP = 2-thiocytidine(32) in tRNA + L-cysteinyl-[cysteine desulfurase] + A + AMP + diphosphate + H(+). It participates in tRNA modification. Catalyzes the ATP-dependent 2-thiolation of cytidine in position 32 of tRNA, to form 2-thiocytidine (s(2)C32). The sulfur atoms are provided by the cysteine/cysteine desulfurase (IscS) system. This is tRNA-cytidine(32) 2-sulfurtransferase from Klebsiella pneumoniae (strain 342).